The chain runs to 266 residues: Indole-3-glycerol phosphate synthase (266 aa).

This sequence belongs to the TrpC family.

The enzyme catalyses 1-(2-carboxyphenylamino)-1-deoxy-D-ribulose 5-phosphate + H(+) = (1S,2R)-1-C-(indol-3-yl)glycerol 3-phosphate + CO2 + H2O. Its pathway is amino-acid biosynthesis; L-tryptophan biosynthesis; L-tryptophan from chorismate: step 4/5. The chain is Indole-3-glycerol phosphate synthase from Herminiimonas arsenicoxydans.